A 159-amino-acid chain; its full sequence is MNVTIISVGKIKEKYLSDAIIEYSKRISRYSKLDIIEVADEKTPENPSDVEKSKILEKEAERILKYLKKDSFLITLEILGKELTSEDLAKKINDLSISGKSDITFVIGGSLGLSKNISEISDFKLSFSKMTFPHQLMRVILLEQIYRSFRIISGEPYHK.

Residues leucine 76, glycine 108, and 127 to 132 (FSKMTF) contribute to the S-adenosyl-L-methionine site.

It belongs to the RNA methyltransferase RlmH family.

It is found in the cytoplasm. The catalysed reaction is pseudouridine(1915) in 23S rRNA + S-adenosyl-L-methionine = N(3)-methylpseudouridine(1915) in 23S rRNA + S-adenosyl-L-homocysteine + H(+). In terms of biological role, specifically methylates the pseudouridine at position 1915 (m3Psi1915) in 23S rRNA. This is Putative ribosomal RNA large subunit methyltransferase H from Methanococcus maripaludis (strain DSM 14266 / JCM 13030 / NBRC 101832 / S2 / LL).